A 393-amino-acid chain; its full sequence is MCWSFHLFFKAHKARVGARTSFLTEMERGSRDHHRDHRDHREHRETREPPTLAFHMKSWKTINKSLKAFAKLLKENTTVTFTPQPSIIIQSAKNHLVQKLTIQAECLFLSDTDRFLTKTINNHIPLFESFMNIISNPEVTKMYIQHDSDLYTRVLVTASDTCTQASVPCVHGQEVVRDTGRSPLRIDLDHSTVSDVLKWLSPVTKTKRSGKSDALMAHIIVQVNPPTIKFVTEMNELEFSNSNKVIFYDVKNMRFNLSAKNLQQALSMCAVIKTSCSLRTVAAKDCKLILTSKSTLLTVEAFLTQEQLKEESRFERMGKQDDGKGDRSHKNDDGSALASKQEMQYKITNYMVPAKNGTAGSSLFNEKEDSESDDSMHFDYSSNPNPKRQRCVV.

Disordered regions lie at residues 25–50 (EMER…REPP), 311–339 (ESRF…ALAS), and 355–393 (KNGT…RCVV). Basic residues predominate over residues 31–41 (RDHHRDHRDHR). Positions 311–333 (ESRFERMGKQDDGKGDRSHKNDD) are enriched in basic and acidic residues.

This sequence belongs to the herpesviridae polymerase accessory protein family.

Its function is as follows. Accessory subunit of the DNA polymerase that acts to increase the processivity of polymerization. The sequence is that of DNA polymerase processivity factor (U27) from Human herpesvirus 6A (strain Uganda-1102) (HHV-6 variant A).